An 897-amino-acid polypeptide reads, in one-letter code: Translation initiation factor IF-2 (897 aa).

The tr-type G domain occupies 402-570; sequence NRAPIVTIMG…SILVQSEILE (169 aa). The interval 411 to 418 is G1; the sequence is GHVDHGKT. A GTP-binding site is contributed by 411 to 418; sequence GHVDHGKT. The segment at 436–440 is G2; it reads GITQN. The G3 stretch occupies residues 458-461; it reads DTPG. GTP is bound by residues 458-462 and 512-515; these read DTPGH and NKID. The interval 512-515 is G4; the sequence is NKID. The tract at residues 548–550 is G5; the sequence is SAV.

This sequence belongs to the TRAFAC class translation factor GTPase superfamily. Classic translation factor GTPase family. IF-2 subfamily.

It localises to the cytoplasm. Functionally, one of the essential components for the initiation of protein synthesis. Protects formylmethionyl-tRNA from spontaneous hydrolysis and promotes its binding to the 30S ribosomal subunits. Also involved in the hydrolysis of GTP during the formation of the 70S ribosomal complex. The protein is Translation initiation factor IF-2 of Blochmanniella floridana.